The sequence spans 341 residues: Dihydroorotate dehydrogenase (quinone) (341 aa).

Residues 59 to 63 (AGLDK) and T83 contribute to the FMN site. A substrate-binding site is contributed by K63. Residue 108-112 (NRMGF) coordinates substrate. FMN contacts are provided by N136 and N169. A substrate-binding site is contributed by N169. S172 acts as the Nucleophile in catalysis. N174 lines the substrate pocket. FMN is bound by residues K214 and T242. Residue 243–244 (NT) participates in substrate binding. FMN-binding positions include G265, G294, and 315–316 (YS).

The protein belongs to the dihydroorotate dehydrogenase family. Type 2 subfamily. As to quaternary structure, monomer. FMN is required as a cofactor.

It is found in the cell membrane. It carries out the reaction (S)-dihydroorotate + a quinone = orotate + a quinol. It functions in the pathway pyrimidine metabolism; UMP biosynthesis via de novo pathway; orotate from (S)-dihydroorotate (quinone route): step 1/1. Functionally, catalyzes the conversion of dihydroorotate to orotate with quinone as electron acceptor. The protein is Dihydroorotate dehydrogenase (quinone) of Neisseria meningitidis serogroup C (strain 053442).